The primary structure comprises 368 residues: Proton-coupled zinc antiporter SLC30A8 (368 aa).

At 1-78 the chain is on the cytoplasmic side; the sequence is MEFLERTYLV…AKWRLCAASA (78 aa). Residues histidine 51, cysteine 52, and histidine 53 each coordinate Zn(2+). The HCH Motif; seals regulatory zinc-binding pocket motif lies at 51-53; sequence HCH. The chain crosses the membrane as a helical span at residues 79–99; the sequence is ICFFFMVAEVVGGHVAGSLAV. Residues 100 to 102 are Lumenal, vesicle-facing; that stretch reads LTD. A helical transmembrane segment spans residues 103-123; it reads AAHLLIDLTSFLLSLFSLWLS. Zn(2+)-binding residues include histidine 105 and aspartate 109. Residues 124 to 139 lie on the Cytoplasmic side of the membrane; that stretch reads SRPPSKRLTFGWYRAE. Residues 140 to 160 traverse the membrane as a helical segment; it reads ILGALLSVLCIWVVTGVLVYL. Over 161 to 174 the chain is Lumenal, vesicle; sequence ACERLLYPDYQIQA. Residues 175–195 traverse the membrane as a helical segment; it reads GIMITVSGCAVAANIVLTLIL. Over 196–216 the chain is Cytoplasmic; the sequence is HQRHLGHNHKDAQANASVRAA. The helical transmembrane segment at 217–237 threads the bilayer; the sequence is FVHALGDVFQSTSVLISALII. Zn(2+) is bound by residues histidine 219 and aspartate 223. The Lumenal, vesicle segment spans residues 238 to 245; that stretch reads YFKPDYKM. A helical membrane pass occupies residues 246-266; sequence ADPVCTFISSVLALASTVMIL. Residues 267–368 are Cytoplasmic-facing; that stretch reads KDFSILLMEG…SCLLCEDPQD (102 aa). Histidine 300, histidine 317, histidine 344, glutamate 351, cysteine 360, and cysteine 363 together coordinate Zn(2+).

The protein belongs to the cation diffusion facilitator (CDF) transporter (TC 2.A.4) family. SLC30A subfamily. In terms of assembly, homodimer. In terms of tissue distribution, expressed in endocrine pancreatic islet alpha and beta cells. May be more abundant in beta cells than in alpha cells. Expressed in cubical epithelium lining thyroid follicles (at protein level). In the adrenal gland, detected in the cortex, but not in the medulla (at protein level).

The protein localises to the cytoplasmic vesicle. The protein resides in the secretory vesicle membrane. It localises to the cell membrane. The catalysed reaction is Zn(2+)(in) + 2 H(+)(out) = Zn(2+)(out) + 2 H(+)(in). Functionally, proton-coupled zinc ion antiporter mediating the entry of zinc into the lumen of pancreatic beta cell secretory granules, thereby regulating insulin secretion. The chain is Proton-coupled zinc antiporter SLC30A8 from Rattus norvegicus (Rat).